A 400-amino-acid chain; its full sequence is Probable tRNA sulfurtransferase (400 aa).

One can recognise a THUMP domain in the interval 60 to 164 (EPIIEKLKNV…KEATYITSGT (105 aa)). ATP contacts are provided by residues 182–183 (LL), 207–208 (HF), Arg264, Gly286, and Gln295.

Belongs to the ThiI family.

The protein resides in the cytoplasm. It carries out the reaction [ThiI sulfur-carrier protein]-S-sulfanyl-L-cysteine + a uridine in tRNA + 2 reduced [2Fe-2S]-[ferredoxin] + ATP + H(+) = [ThiI sulfur-carrier protein]-L-cysteine + a 4-thiouridine in tRNA + 2 oxidized [2Fe-2S]-[ferredoxin] + AMP + diphosphate. The catalysed reaction is [ThiS sulfur-carrier protein]-C-terminal Gly-Gly-AMP + S-sulfanyl-L-cysteinyl-[cysteine desulfurase] + AH2 = [ThiS sulfur-carrier protein]-C-terminal-Gly-aminoethanethioate + L-cysteinyl-[cysteine desulfurase] + A + AMP + 2 H(+). The protein operates within cofactor biosynthesis; thiamine diphosphate biosynthesis. Catalyzes the ATP-dependent transfer of a sulfur to tRNA to produce 4-thiouridine in position 8 of tRNAs, which functions as a near-UV photosensor. Also catalyzes the transfer of sulfur to the sulfur carrier protein ThiS, forming ThiS-thiocarboxylate. This is a step in the synthesis of thiazole, in the thiamine biosynthesis pathway. The sulfur is donated as persulfide by IscS. In Oceanobacillus iheyensis (strain DSM 14371 / CIP 107618 / JCM 11309 / KCTC 3954 / HTE831), this protein is Probable tRNA sulfurtransferase.